Consider the following 145-residue polypeptide: D-aminoacyl-tRNA deacylase (145 aa).

The Gly-cisPro motif, important for rejection of L-amino acids signature appears at 137 to 138 (GP).

This sequence belongs to the DTD family. As to quaternary structure, homodimer.

The protein localises to the cytoplasm. The enzyme catalyses glycyl-tRNA(Ala) + H2O = tRNA(Ala) + glycine + H(+). The catalysed reaction is a D-aminoacyl-tRNA + H2O = a tRNA + a D-alpha-amino acid + H(+). Its function is as follows. An aminoacyl-tRNA editing enzyme that deacylates mischarged D-aminoacyl-tRNAs. Also deacylates mischarged glycyl-tRNA(Ala), protecting cells against glycine mischarging by AlaRS. Acts via tRNA-based rather than protein-based catalysis; rejects L-amino acids rather than detecting D-amino acids in the active site. By recycling D-aminoacyl-tRNA to D-amino acids and free tRNA molecules, this enzyme counteracts the toxicity associated with the formation of D-aminoacyl-tRNA entities in vivo and helps enforce protein L-homochirality. The polypeptide is D-aminoacyl-tRNA deacylase (Francisella tularensis subsp. holarctica (strain LVS)).